The following is a 356-amino-acid chain: MTDLTTQEAIVLERPGKITLTNVSIPKISDPNEVIIQIKATGICGSDIHYYTHGRIANYVVESPMVLGHESSGIVALIGENVKTLKVGDRVALEPGIPDRFSPEMKEGRYNLDPNLKFAATPPFDGTLTKYYKTMKDFVYKLPDDVSFEEGALIEPLSVAIHANKLAKIKFGARCVVFGAGPIGLLAGKVASVFGAADVVFVDLLENKLETARQFGATHIVNSGDLPHGVTVDSVIKKAIGKKGADVVFECSGAEPCVRAGIEVCKAGGTIVQVGMGQEEIQFPISIIPTKELTFQGCFRYCQGDYSDSIELVSSRKLSLKPFITHRYSFKDAVEAFEETSHHPLNNIKTIIEGPE.

Zn(2+) contacts are provided by Cys44, His69, and Glu155. Gly179–Gly184 provides a ligand contact to NAD(+).

The protein belongs to the zinc-containing alcohol dehydrogenase family. Zn(2+) is required as a cofactor.

The catalysed reaction is xylitol + NAD(+) = D-xylulose + NADH + H(+). The protein operates within carbohydrate degradation; L-arabinose degradation via L-arabinitol; D-xylulose 5-phosphate from L-arabinose (fungal route): step 4/5. In Saccharomyces cerevisiae (strain ATCC 204508 / S288c) (Baker's yeast), this protein is D-xylulose reductase (XYL2).